The sequence spans 302 residues: Ornithine carbamoyltransferase (302 aa).

Residues 52–55, glutamine 79, arginine 103, and 130–133 contribute to the carbamoyl phosphate site; these read STRT and HPCQ. L-ornithine contacts are provided by residues asparagine 161, aspartate 221, and 225-226; that span reads SM. Carbamoyl phosphate-binding positions include 261 to 262 and arginine 289; that span reads CL.

It belongs to the aspartate/ornithine carbamoyltransferase superfamily. OTCase family.

The protein resides in the cytoplasm. The enzyme catalyses carbamoyl phosphate + L-ornithine = L-citrulline + phosphate + H(+). It participates in amino-acid biosynthesis; L-arginine biosynthesis; L-arginine from L-ornithine and carbamoyl phosphate: step 1/3. Functionally, reversibly catalyzes the transfer of the carbamoyl group from carbamoyl phosphate (CP) to the N(epsilon) atom of ornithine (ORN) to produce L-citrulline. In Methanospirillum hungatei JF-1 (strain ATCC 27890 / DSM 864 / NBRC 100397 / JF-1), this protein is Ornithine carbamoyltransferase.